We begin with the raw amino-acid sequence, 60 residues long: Large ribosomal subunit protein bL32 (60 aa).

2 disordered regions span residues 1-22 and 34-60; these read MAVQQNKKSPSKRGMHRSHNAL and GETHLRHHISPNGFYRGRQVLKNKSEA. The span at 9–19 shows a compositional bias: basic residues; sequence SPSKRGMHRSH.

Belongs to the bacterial ribosomal protein bL32 family.

This Variovorax paradoxus (strain S110) protein is Large ribosomal subunit protein bL32.